Here is a 494-residue protein sequence, read N- to C-terminus: Glutamyl-tRNA(Gln) amidotransferase subunit A (494 aa).

Active-site charge relay system residues include Lys-79 and Ser-159. Ser-183 acts as the Acyl-ester intermediate in catalysis.

Belongs to the amidase family. GatA subfamily. Heterotrimer of A, B and C subunits.

The catalysed reaction is L-glutamyl-tRNA(Gln) + L-glutamine + ATP + H2O = L-glutaminyl-tRNA(Gln) + L-glutamate + ADP + phosphate + H(+). In terms of biological role, allows the formation of correctly charged Gln-tRNA(Gln) through the transamidation of misacylated Glu-tRNA(Gln) in organisms which lack glutaminyl-tRNA synthetase. The reaction takes place in the presence of glutamine and ATP through an activated gamma-phospho-Glu-tRNA(Gln). The protein is Glutamyl-tRNA(Gln) amidotransferase subunit A of Bartonella bacilliformis (strain ATCC 35685 / KC583 / Herrer 020/F12,63).